A 295-amino-acid chain; its full sequence is MQHLIRTSDFTKEEILDIFEDARGFLDFKPCEILKGKIIVTLFFENSTRTRSSFEIAAKRLGAEIVNLDVGTSSTKKGETMYDTVANINAMGPDAIVIRHSECGLPESLIGYVDCPIINAGDGRHSHPTQALLDLFTIYEHFNGQTEGKKIAIVGDVRNSRVAGSNRRLLPRFGIDVNLVAPDCFKYEGNEFKQFNTIAEVIDDMDVVMSLRSQLERHNITYFESLQEYAKDFCITPELMEGRDFLLLHPGPVNRNIDISDEVLKDPRCKVLEQVRNGVAVRAAILKKLILNNKN.

Positions 49 and 50 each coordinate carbamoyl phosphate. Lysine 77 contributes to the L-aspartate binding site. Residues arginine 99, histidine 127, and glutamine 130 each contribute to the carbamoyl phosphate site. Arginine 161 and arginine 212 together coordinate L-aspartate. The carbamoyl phosphate site is built by glycine 251 and proline 252.

The protein belongs to the aspartate/ornithine carbamoyltransferase superfamily. ATCase family. Heterododecamer (2C3:3R2) of six catalytic PyrB chains organized as two trimers (C3), and six regulatory PyrI chains organized as three dimers (R2).

The catalysed reaction is carbamoyl phosphate + L-aspartate = N-carbamoyl-L-aspartate + phosphate + H(+). It participates in pyrimidine metabolism; UMP biosynthesis via de novo pathway; (S)-dihydroorotate from bicarbonate: step 2/3. Its function is as follows. Catalyzes the condensation of carbamoyl phosphate and aspartate to form carbamoyl aspartate and inorganic phosphate, the committed step in the de novo pyrimidine nucleotide biosynthesis pathway. In Aliarcobacter butzleri (strain RM4018) (Arcobacter butzleri), this protein is Aspartate carbamoyltransferase catalytic subunit.